The sequence spans 400 residues: NAD-dependent protein deacetylase sirtuin-7 (400 aa).

Residues methionine 1–arginine 28 form a disordered region. Positions arginine 8–arginine 28 are enriched in basic and acidic residues. The Deacetylase sirtuin-type domain maps to proline 82–glutamate 329. Residues glycine 107–tryptophan 126 and glutamine 167–aspartate 170 each bind NAD(+). The Proton acceptor role is filled by histidine 187. Cysteine 195, cysteine 198, cysteine 225, and cysteine 228 together coordinate Zn(2+). NAD(+) is bound by residues glycine 268–serine 270, asparagine 297–glutamine 299, and cysteine 315. A disordered region spans residues serine 354–proline 380. Arginine 388 is modified (asymmetric dimethylarginine; alternate). Arginine 388 is subject to Omega-N-methylarginine; alternate.

It belongs to the sirtuin family. Class IV subfamily. Interacts with UBTF and the RNA polymerase I complex. Interacts with components of the B-WICH complex, such as MYBBP1A, SMARCA5/SNF2H and BAZ1B/WSTF. Interacts with ELK4, leading to stabilization at target promoters for H3K18Ac deacetylation. Interacts with histone H2A and/or histone H2B. Interacts with DNMT1. Interacts with SIRT1. It depends on Zn(2+) as a cofactor. Phosphorylated during mitosis. In terms of processing, methylation at Arg-388 by PRMT6 inhibits the H3K18Ac histone deacetylase activity, promoting mitochondria biogenesis and maintaining mitochondria respiration. Post-translationally, ubiquitinated via 'Lys-63'-linked ubiquitin chains. Deubiquitinated by USP7, inhibiting the H3K18Ac histone deacetylase activity and regulating gluconeogenesis. Ubiquitinated by E3 ubiquitin-protein ligase complex containing FBXO7; leading to proteasomal degradation.

It is found in the nucleus. It localises to the nucleolus. The protein resides in the nucleoplasm. The protein localises to the chromosome. Its subcellular location is the cytoplasm. It catalyses the reaction N(6)-acetyl-L-lysyl-[protein] + NAD(+) + H2O = 2''-O-acetyl-ADP-D-ribose + nicotinamide + L-lysyl-[protein]. The enzyme catalyses N(6)-glutaryl-L-lysyl-[protein] + NAD(+) + H2O = 2''-O-glutaryl-ADP-D-ribose + nicotinamide + L-lysyl-[protein]. The catalysed reaction is N(6)-succinyl-L-lysyl-[protein] + NAD(+) + H2O = 2''-O-succinyl-ADP-D-ribose + nicotinamide + L-lysyl-[protein]. It carries out the reaction N(6)-propanoyl-L-lysyl-[protein] + NAD(+) + H2O = 3''-O-propanoyl-ADP-D-ribose + nicotinamide + L-lysyl-[protein]. It catalyses the reaction N(6)-decanoyl-L-lysyl-[protein] + NAD(+) + H2O = 2''-O-decanoyl-ADP-D-ribose + nicotinamide + L-lysyl-[protein]. NAD-dependent protein-lysine deacetylase and deacylase activities are activated by nucleic acids. Histone deacetylase activity is activated by DNA. Protein-lysine deacylase activity is activated by RNA. H3K18Ac histone deacetylase activity is inhibited by methylation at Arg-388. H3K18Ac histone deacetylase activity is inhibited by deubiquitination by USP7. In terms of biological role, NAD-dependent protein-lysine deacylase that can act both as a deacetylase or deacylase (desuccinylase, depropionylase, deglutarylase and dedecanoylase), depending on the context. Specifically mediates deacetylation of histone H3 at 'Lys-18' (H3K18Ac). In contrast to other histone deacetylases, displays strong preference for a specific histone mark, H3K18Ac, directly linked to control of gene expression. H3K18Ac is mainly present around the transcription start site of genes and has been linked to activation of nuclear hormone receptors; SIRT7 thereby acts as a transcription repressor. Moreover, H3K18 hypoacetylation has been reported as a marker of malignancy in various cancers and seems to maintain the transformed phenotype of cancer cells. Also able to mediate deacetylation of histone H3 at 'Lys-36' (H3K36Ac) in the context of nucleosomes. Also mediates deacetylation of non-histone proteins, such as ATM, CDK9, DDX21, DDB1, FBL, FKBP5/FKBP51, GABPB1, RAN, RRP9/U3-55K and POLR1E/PAF53. Enriched in nucleolus where it stimulates transcription activity of the RNA polymerase I complex. Acts by mediating the deacetylation of the RNA polymerase I subunit POLR1E/PAF53, thereby promoting the association of RNA polymerase I with the rDNA promoter region and coding region. In response to metabolic stress, SIRT7 is released from nucleoli leading to hyperacetylation of POLR1E/PAF53 and decreased RNA polymerase I transcription. Required to restore the transcription of ribosomal RNA (rRNA) at the exit from mitosis. Promotes pre-ribosomal RNA (pre-rRNA) cleavage at the 5'-terminal processing site by mediating deacetylation of RRP9/U3-55K, a core subunit of the U3 snoRNP complex. Mediates 'Lys-37' deacetylation of Ran, thereby regulating the nuclear export of NF-kappa-B subunit RELA/p65. Acts as a regulator of DNA damage repair by mediating deacetylation of ATM during the late stages of DNA damage response, promoting ATM dephosphorylation and deactivation. Suppresses the activity of the DCX (DDB1-CUL4-X-box) E3 ubiquitin-protein ligase complexes by mediating deacetylation of DDB1, which prevents the interaction between DDB1 and CUL4 (CUL4A or CUL4B). Activates RNA polymerase II transcription by mediating deacetylation of CDK9, thereby promoting 'Ser-2' phosphorylation of the C-terminal domain (CTD) of RNA polymerase II. Deacetylates FBL, promoting histone-glutamine methyltransferase activity of FBL. Acts as a regulator of mitochondrial function by catalyzing deacetylation of GABPB1. Regulates Akt/AKT1 activity by mediating deacetylation of FKBP5/FKBP51. Required to prevent R-loop-associated DNA damage and transcription-associated genomic instability by mediating deacetylation and subsequent activation of DDX21, thereby overcoming R-loop-mediated stalling of RNA polymerases. In addition to protein deacetylase activity, also acts as a protein-lysine deacylase. Acts as a protein depropionylase by mediating depropionylation of Osterix (SP7), thereby regulating bone formation by osteoblasts. Acts as a histone deglutarylase by mediating deglutarylation of histone H4 on 'Lys-91' (H4K91glu); a mark that destabilizes nucleosomes by promoting dissociation of the H2A-H2B dimers from nucleosomes. Acts as a histone desuccinylase: in response to DNA damage, recruited to DNA double-strand breaks (DSBs) and catalyzes desuccinylation of histone H3 on 'Lys-122' (H3K122succ), thereby promoting chromatin condensation and DSB repair. Also promotes DSB repair by promoting H3K18Ac deacetylation, regulating non-homologous end joining (NHEJ). Along with its role in DNA repair, required for chromosome synapsis during prophase I of female meiosis by catalyzing H3K18Ac deacetylation. Involved in transcriptional repression of LINE-1 retrotransposon via H3K18Ac deacetylation, and promotes their association with the nuclear lamina. Required to stabilize ribosomal DNA (rDNA) heterochromatin and prevent cellular senescence induced by rDNA instability. Acts as a negative regulator of SIRT1 by preventing autodeacetylation of SIRT1, restricting SIRT1 deacetylase activity. The polypeptide is NAD-dependent protein deacetylase sirtuin-7 (SIRT7) (Bos taurus (Bovine)).